The following is a 218-amino-acid chain: Guanylate kinase (218 aa).

A Guanylate kinase-like domain is found at 15-194; sequence GMMLVLSSPS…SIADVRAILR (180 aa). An ATP-binding site is contributed by 22–29; sequence SPSGAGKT.

It belongs to the guanylate kinase family.

Its subcellular location is the cytoplasm. It catalyses the reaction GMP + ATP = GDP + ADP. Essential for recycling GMP and indirectly, cGMP. This chain is Guanylate kinase, found in Rhodospirillum rubrum (strain ATCC 11170 / ATH 1.1.1 / DSM 467 / LMG 4362 / NCIMB 8255 / S1).